The following is a 277-amino-acid chain: Putative phosphoenolpyruvate synthase regulatory protein (277 aa).

157-164 (GVSRCGKT) provides a ligand contact to ADP.

The protein belongs to the pyruvate, phosphate/water dikinase regulatory protein family. PSRP subfamily.

It carries out the reaction [pyruvate, water dikinase] + ADP = [pyruvate, water dikinase]-phosphate + AMP + H(+). The catalysed reaction is [pyruvate, water dikinase]-phosphate + phosphate + H(+) = [pyruvate, water dikinase] + diphosphate. Its function is as follows. Bifunctional serine/threonine kinase and phosphorylase involved in the regulation of the phosphoenolpyruvate synthase (PEPS) by catalyzing its phosphorylation/dephosphorylation. This chain is Putative phosphoenolpyruvate synthase regulatory protein, found in Enterobacter sp. (strain 638).